We begin with the raw amino-acid sequence, 509 residues long: Surface lipoprotein assembly modifier (509 aa).

An N-terminal signal peptide occupies residues 1–32; the sequence is MNLMINLKPLTFLPFFGRLVFLSGVIYNTAWA. The N-terminal domain stretch occupies residues 33 to 204; that stretch reads NTVIPVDNSR…SYIDTINQRD (172 aa). Positions 43-72 are disordered; it reads PDETFSQTSPKQHLFSQKPKPTEPTSSASS. Over residues 46–57 the composition is skewed to polar residues; that stretch reads TFSQTSPKQHLF. The TPR repeat unit spans residues 120 to 153; it reads FLLKWAQAVVARKQGKLNESVRLYRQIIAEKPNL. The tract at residues 205–509 is C-terminal probable beta barrel; that stretch reads SWNVYGGVNY…RIYLTFSKTF (305 aa). 14 beta stranded membrane passes run 206-216, 245-256, 261-270, 284-294, 298-308, 331-341, 345-355, 371-381, 386-395, 408-417, 423-432, 461-470, 476-485, and 499-509; these read WNVYGGVNYLH, LSYFINLSKNWS, FFTEFSADIN, STRLNLGGGYR, TEVKLMPFVEQ, SGINLDVDYWL, WKISTVLEYTE, YSISNTLIYMP, FWFVGLDYYQ, QGIRLGWGQE, STRLQTSYAT, GVNFTIWHRS, ITPKITWAYQ, and NRIYLTFSKTF.

The protein belongs to the Slam family.

Its subcellular location is the cell outer membrane. Functionally, required for correct export to the cell surface of some cell outer membrane lipoproteins (tested with PM1514) upon heterologous expression in E.coli and probably also in Pasteurella. The protein is Surface lipoprotein assembly modifier of Pasteurella multocida (strain Pm70).